Consider the following 3225-residue polypeptide: Intermembrane lipid transfer protein VPS13 (3225 aa).

The tract at residues 1 to 1390 (MLEGLVAGLL…VFAADVEQHT (1390 aa)) is involved in phospholipid binding. The Chorein N-terminal domain occupies 2-115 (LEGLVAGLLN…RHRLKMEKLD (114 aa)). Disordered stretches follow at residues 1568-1610 (PEAP…QQLV) and 1768-1799 (AGLK…SHSG). The segment covering 1590-1610 (VRVGSSGRHSESSAGSGQQLV) has biased composition (low complexity). Residues 1777–1799 (GKGTSTLATRTRHASQSAASHSG) are compositionally biased toward polar residues. Positions 2290–2570 (FKVTVYSPYV…PYAWDFPAAK (281 aa)) constitute an SHR-BD domain.

Belongs to the VPS13 family.

The protein resides in the membrane. Mediates the transfer of lipids between membranes at organelle contact sites. Binds phospholipids, including phosphatidylcholine (PC), phosphatidylethanolamine (PE), phosphatidic acid (PA), and phosphatidylserine (PS). May play a role in mitochondrial lipid homeostasis, Golgi vesicle transport, reticulophagy, actin cytoskeleton organization and formation of the prospore membrane. This chain is Intermembrane lipid transfer protein VPS13, found in Chaetomium thermophilum (strain DSM 1495 / CBS 144.50 / IMI 039719) (Thermochaetoides thermophila).